Here is a 320-residue protein sequence, read N- to C-terminus: MQTRNAFSWLKKQITRSISVSLMIYILTRTSISSAYPIFAQQGYENPREATGRIVCANCHLANKPVEIEVPQAVLPDTVFEAVVRIPYDMQLKQVLANGKRGGLNVGAVLILPEGFELAPPDRISPEMKEKIGNLSFQSYRPNKKNILVIGPVPGQKYSEITFPILSPDPATKKDVHFLKYPIYVGGNRGRGQIYPDGSKSNNTVYNATAAGIVSKIIRKEKGGYEITITDASDGRQVVDIIPPGPELLVSEGESIKFDQPLTSNPNVGGFGQGDAEIVLQDPLRVQGLLFFLASVILAQIFLVLKKKQFEKVQLAEMNF.

A signal peptide spans 1 to 35 (MQTRNAFSWLKKQITRSISVSLMIYILTRTSISSA). Positions 36, 56, 59, and 60 each coordinate heme. Residues 286–306 (VQGLLFFLASVILAQIFLVLK) form a helical membrane-spanning segment.

This sequence belongs to the cytochrome f family. As to quaternary structure, the 4 large subunits of the cytochrome b6-f complex are cytochrome b6, subunit IV (17 kDa polypeptide, petD), cytochrome f and the Rieske protein, while the 4 small subunits are PetG, PetL, PetM and PetN. The complex functions as a dimer. The cofactor is heme.

The protein localises to the plastid. It localises to the chloroplast thylakoid membrane. Functionally, component of the cytochrome b6-f complex, which mediates electron transfer between photosystem II (PSII) and photosystem I (PSI), cyclic electron flow around PSI, and state transitions. This is Cytochrome f from Nicotiana sylvestris (Wood tobacco).